Consider the following 226-residue polypeptide: Acyl-protein thioesterase 1 homolog 1 (226 aa).

Active-site charge relay system residues include serine 121, aspartate 174, and histidine 206.

It belongs to the AB hydrolase superfamily. AB hydrolase 2 family.

It is found in the cytoplasm. The protein localises to the nucleus. The enzyme catalyses S-hexadecanoyl-L-cysteinyl-[protein] + H2O = L-cysteinyl-[protein] + hexadecanoate + H(+). Functionally, hydrolyzes fatty acids from S-acylated cysteine residues in proteins with a strong preference for palmitoylated G-alpha proteins over other acyl substrates. Mediates the deacylation of G-alpha proteins such as GPA1 in vivo, but has weak or no activity toward palmitoylated Ras proteins. Has weak lysophospholipase activity in vitro; however such activity may not exist in vivo. The protein is Acyl-protein thioesterase 1 homolog 1 of Dictyostelium discoideum (Social amoeba).